Here is a 296-residue protein sequence, read N- to C-terminus: MSKTAPKTYITSGHSGCAGCCDAFAAKFTLMGAGPNTIVINPTGCLEVMSTPFPYSSWQVPWIHSLFENAGAVASGVEAALKALGKKDDVKVVSIGGDGSTMDIGLGALSGAFERGHDFTYVCMDNEAYMNTGVQRSSGTPFDASTTTTPAGKVSFGNPRPKKNMPAIMAAHGSPYVATTSIGFPRDMIRKVKKATEIVGPTYIHAQAPCPTGWGFDTSKTLEIAKLAVETCLWPMYEMENGEITQVRKVKNPRPVEEYLRAQKRFKHLFTMEGGEEEIKKIQAIADWNIKHFELQ.

[4Fe-4S] cluster contacts are provided by cysteine 17, cysteine 20, and cysteine 45. Over residues 140–150 (TPFDASTTTTP) the composition is skewed to polar residues. Residues 140–159 (TPFDASTTTTPAGKVSFGNP) are disordered. Cysteine 210 lines the [4Fe-4S] cluster pocket.

In terms of assembly, heterotetramer of one alpha, one beta, one delta and one gamma chain. [4Fe-4S] cluster is required as a cofactor.

The catalysed reaction is 2 oxidized [2Fe-2S]-[ferredoxin] + pyruvate + CoA = 2 reduced [2Fe-2S]-[ferredoxin] + acetyl-CoA + CO2 + H(+). The polypeptide is Pyruvate synthase subunit PorB (porB) (Methanosarcina barkeri (strain Fusaro / DSM 804)).